The following is an 84-amino-acid chain: Defensin-like protein 37 (84 aa).

An N-terminal signal peptide occupies residues M1–S24. 3 disulfide bridges follow: C46-C67, C52-C79, and C56-C81.

Belongs to the DEFL family.

It localises to the secreted. The protein is Defensin-like protein 37 (EDA21) of Arabidopsis thaliana (Mouse-ear cress).